Here is a 61-residue protein sequence, read N- to C-terminus: MAKLRITQIRSGIGGTSNQRATLRTLGLRKINATTVRDDRPEIRGMIRTVTHLVRVEEVDS.

This sequence belongs to the universal ribosomal protein uL30 family. In terms of assembly, part of the 50S ribosomal subunit.

This chain is Large ribosomal subunit protein uL30, found in Frankia casuarinae (strain DSM 45818 / CECT 9043 / HFP020203 / CcI3).